The chain runs to 93 residues: Aspartyl/glutamyl-tRNA(Asn/Gln) amidotransferase subunit C (93 aa).

The protein belongs to the GatC family. In terms of assembly, heterotrimer of A, B and C subunits.

The enzyme catalyses L-glutamyl-tRNA(Gln) + L-glutamine + ATP + H2O = L-glutaminyl-tRNA(Gln) + L-glutamate + ADP + phosphate + H(+). It catalyses the reaction L-aspartyl-tRNA(Asn) + L-glutamine + ATP + H2O = L-asparaginyl-tRNA(Asn) + L-glutamate + ADP + phosphate + 2 H(+). In terms of biological role, allows the formation of correctly charged Asn-tRNA(Asn) or Gln-tRNA(Gln) through the transamidation of misacylated Asp-tRNA(Asn) or Glu-tRNA(Gln) in organisms which lack either or both of asparaginyl-tRNA or glutaminyl-tRNA synthetases. The reaction takes place in the presence of glutamine and ATP through an activated phospho-Asp-tRNA(Asn) or phospho-Glu-tRNA(Gln). The protein is Aspartyl/glutamyl-tRNA(Asn/Gln) amidotransferase subunit C of Rubrobacter xylanophilus (strain DSM 9941 / JCM 11954 / NBRC 16129 / PRD-1).